Here is a 174-residue protein sequence, read N- to C-terminus: MNINKPLEILGHVSWLWASSPLHRNWPVSLFAINVLPAIRANQYVLLTRDNYPVAYCSWANLSLENEIKYLNDVTSLVAEDWTSGDRKWFIDWIAPFGDNGALYKYMRKKFPDELFLAIRVDPKTHVGKVSEFHGGKIDKHLANKIFKQYHHELITEVKNKTDFQFFINRLRGN.

Residues histidine 23 and aspartate 92 contribute to the active site. A heme-binding site is contributed by histidine 151.

It belongs to the RTX toxin acyltransferase family. In terms of assembly, monomer. Post-translationally, proteolytically cleaved by the protease systems ClpAP, ClpXP and FtsH, leading to its degradation.

It localises to the cytoplasm. The catalysed reaction is tetradecanoyl-[ACP] + L-lysyl-[protein] = N(6)-tetradecanoyl-L-lysyl-[protein] + holo-[ACP] + H(+). Its activity is regulated as follows. The acyltransferase activity is inhibited by heme. In terms of biological role, protein-lysine myristoyltransferase that catalyzes myristoylation of the protoxin (HlyA) at two internal lysine residues, thereby converting it to the active toxin. The chain is Protein-lysine myristoyltransferase HlyC from Escherichia coli.